The sequence spans 524 residues: 2-isopropylmalate synthase (524 aa).

In terms of domain architecture, Pyruvate carboxyltransferase spans 12–274 (VIIFDTTLRD…WNNIETTMLT (263 aa)). Mn(2+) contacts are provided by Asp-21, His-209, His-211, and Asn-245. The segment at 398–524 (KLNSLTVIAG…EAVPAVAAAG (127 aa)) is regulatory domain.

Belongs to the alpha-IPM synthase/homocitrate synthase family. LeuA type 1 subfamily. As to quaternary structure, homodimer. Mn(2+) is required as a cofactor.

The protein localises to the cytoplasm. The catalysed reaction is 3-methyl-2-oxobutanoate + acetyl-CoA + H2O = (2S)-2-isopropylmalate + CoA + H(+). It participates in amino-acid biosynthesis; L-leucine biosynthesis; L-leucine from 3-methyl-2-oxobutanoate: step 1/4. Its function is as follows. Catalyzes the condensation of the acetyl group of acetyl-CoA with 3-methyl-2-oxobutanoate (2-ketoisovalerate) to form 3-carboxy-3-hydroxy-4-methylpentanoate (2-isopropylmalate). This is 2-isopropylmalate synthase from Rhodopseudomonas palustris (strain HaA2).